A 429-amino-acid polypeptide reads, in one-letter code: Ribosomal RNA small subunit methyltransferase B (429 aa).

Residues 254-260 (CAAPGGK), aspartate 277, aspartate 303, and aspartate 322 each bind S-adenosyl-L-methionine. Cysteine 375 functions as the Nucleophile in the catalytic mechanism.

It belongs to the class I-like SAM-binding methyltransferase superfamily. RsmB/NOP family.

Its subcellular location is the cytoplasm. The enzyme catalyses cytidine(967) in 16S rRNA + S-adenosyl-L-methionine = 5-methylcytidine(967) in 16S rRNA + S-adenosyl-L-homocysteine + H(+). Its function is as follows. Specifically methylates the cytosine at position 967 (m5C967) of 16S rRNA. This Escherichia coli (strain SMS-3-5 / SECEC) protein is Ribosomal RNA small subunit methyltransferase B.